We begin with the raw amino-acid sequence, 156 residues long: MSRRHAAEKREVLPDPKFGNIVVTKFMNSVMYAGKKSVAERIVYGALDLIEAKTKQPPLGVFEQALDNVMPAIEVRSRRVGGATYQVPVEVRSTRRQALGIRWLITAARGRNEKTMTERLSAELLDASNNRGNAVKKREDVHKMAEANRAFSHYRW.

It belongs to the universal ribosomal protein uS7 family. As to quaternary structure, part of the 30S ribosomal subunit. Contacts proteins S9 and S11.

In terms of biological role, one of the primary rRNA binding proteins, it binds directly to 16S rRNA where it nucleates assembly of the head domain of the 30S subunit. Is located at the subunit interface close to the decoding center, probably blocks exit of the E-site tRNA. In Rhodopseudomonas palustris (strain BisB5), this protein is Small ribosomal subunit protein uS7.